The following is a 426-amino-acid chain: MSKSENLYSAARELIPGGVNSPVRAFTGVGGTPLFIEKADGAYLYDVDGKAYIDYVGSWGPMVLGHNHPAIRNAVIEAAERGLSFGAPTEMEVKMAQLVTELVPTMDMVRMVNSGTEATMSAIRLARGFTGRDKIIKFEGCYHGHADCLLVKAGSGALTLGQPNSPGVPADFAKHTLTCTYNDLASVRAAFEQYPQEIACIIIEPVAGNMNCVPPLPDFLPGLRALCDEFGALLIIDEVMTGFRVALAGAQDYYGVEPDLTCLGKIIGGGMPVGAFGGRRDVMDALAPTGPVYQAGTLSGNPIAMAAGFACLNEVAQPGVHETLDELTTRLAEGLLEAAEEAGIPLVVNHVGGMFGIFFTDAESVTCYQDVMACDVERFKRFFHMMLDEGVYLAPSAFEAGFMSVAHSMEDINNTIDAARRVFAKL.

Lysine 265 carries the N6-(pyridoxal phosphate)lysine modification.

This sequence belongs to the class-III pyridoxal-phosphate-dependent aminotransferase family. HemL subfamily. In terms of assembly, homodimer. Requires pyridoxal 5'-phosphate as cofactor.

It localises to the cytoplasm. The catalysed reaction is (S)-4-amino-5-oxopentanoate = 5-aminolevulinate. It functions in the pathway porphyrin-containing compound metabolism; protoporphyrin-IX biosynthesis; 5-aminolevulinate from L-glutamyl-tRNA(Glu): step 2/2. This Shigella sonnei (strain Ss046) protein is Glutamate-1-semialdehyde 2,1-aminomutase.